The primary structure comprises 384 residues: Mitogen-activated protein kinase 8 (384 aa).

The 296-residue stretch at 26–321 (YQNLKPIGSG…VDEALQHPYI (296 aa)) folds into the Protein kinase domain. ATP-binding positions include 32 to 40 (IGSGAQGIV) and Lys-55. Cys-116 is subject to S-nitrosocysteine. Asp-151 functions as the Proton acceptor in the catalytic mechanism. Position 183 is a phosphothreonine; by MAP2K7 (Thr-183). Positions 183–185 (TPY) match the TXY motif. A Phosphotyrosine; by MAP2K4 modification is found at Tyr-185. Residue Ser-377 is modified to Phosphoserine.

This sequence belongs to the protein kinase superfamily. CMGC Ser/Thr protein kinase family. MAP kinase subfamily. Binds to at least four scaffolding proteins, MAPK8IP1/JIP-1, MAPK8IP2/JIP-2, MAPK8IP3/JIP-3/JSAP1 and SPAG9/MAPK8IP4/JIP-4. These proteins also bind other components of the JNK signaling pathway. Forms a complex with MAPK8IP1 and ARHGEF28. Interacts with TP53 and WWOX. Interacts with JAMP. Interacts with NFATC4. Interacts with MECOM; regulates JNK signaling. Interacts with PIN1; this interaction mediates MAPK8 conformational changes leading to the binding of MAPK8 to its substrates. Interacts with HSF1 (via D domain and preferentially with hyperphosphorylated form); this interaction occurs under both normal growth conditions and immediately upon heat shock. Interacts (phosphorylated form) with NFE2; the interaction phosphorylates NFE2 in undifferentiated cells. Interacts with GRIPAP1. Interacts with POU5F1; phosphorylates POU5F1 at 'Ser-347'. Found in a complex with SH3RF1, RAC1, MAP3K11/MLK3, MAP2K7/MKK7 and MAPK8IP1/JIP1. Found in a complex with SH3RF1, RAC2, MAP3K7/TAK1, MAP2K7/MKK7, MAPK8IP1/JIP1 and MAPK9/JNK2. Requires Mg(2+) as cofactor. Post-translationally, phosphorylated by TAOK2. Dually phosphorylated on Thr-183 and Tyr-185 by MAP2K7 and MAP2K4, which activates the enzyme. May be phosphorylated at Thr-183 and Tyr-185 by MAP3K1/MEKK1. Phosphorylated form is more concentrated at synapses than none-phosphorylated. In terms of tissue distribution, brain (at protein level).

The protein resides in the cytoplasm. It localises to the nucleus. It is found in the synapse. It carries out the reaction L-seryl-[protein] + ATP = O-phospho-L-seryl-[protein] + ADP + H(+). It catalyses the reaction L-threonyl-[protein] + ATP = O-phospho-L-threonyl-[protein] + ADP + H(+). Its activity is regulated as follows. Inhibited by SERPINB3. Activated by threonine and tyrosine phosphorylation by either of two dual specificity kinases, MAP2K4 and MAP2K7. MAP2K4 shows a strong preference for Tyr-185 while MAP2K7 phosphorylates Tyr-183 preferentially. Inhibited by dual specificity phosphatases, such as DUSP1. Functionally, serine/threonine-protein kinase involved in various processes such as cell proliferation, differentiation, migration, transformation and programmed cell death. Extracellular stimuli such as pro-inflammatory cytokines or physical stress stimulate the stress-activated protein kinase/c-Jun N-terminal kinase (SAP/JNK) signaling pathway. In this cascade, two dual specificity kinases MAP2K4/MKK4 and MAP2K7/MKK7 phosphorylate and activate MAPK8/JNK1. In turn, MAPK8/JNK1 phosphorylates a number of transcription factors, primarily components of AP-1 such as JUN, JDP2 and ATF2 and thus regulates AP-1 transcriptional activity. Phosphorylates the replication licensing factor CDT1, inhibiting the interaction between CDT1 and the histone H4 acetylase HBO1 to replication origins. Loss of this interaction abrogates the acetylation required for replication initiation. Promotes stressed cell apoptosis by phosphorylating key regulatory factors including p53/TP53 and Yes-associates protein YAP1. In T-cells, MAPK8 and MAPK9 are required for polarized differentiation of T-helper cells into Th1 cells. Contributes to the survival of erythroid cells by phosphorylating the antagonist of cell death BAD upon EPO stimulation. Mediates starvation-induced BCL2 phosphorylation, BCL2 dissociation from BECN1, and thus activation of autophagy. Phosphorylates STMN2 and hence regulates microtubule dynamics, controlling neurite elongation in cortical neurons. In the developing brain, through its cytoplasmic activity on STMN2, negatively regulates the rate of exit from multipolar stage and of radial migration from the ventricular zone. Phosphorylates several other substrates including heat shock factor protein 4 (HSF4), the deacetylase SIRT1, ELK1, or the E3 ligase ITCH. Phosphorylates the CLOCK-BMAL1 heterodimer and plays a role in the regulation of the circadian clock. Phosphorylates the heat shock transcription factor HSF1, suppressing HSF1-induced transcriptional activity. Phosphorylates POU5F1, which results in the inhibition of POU5F1's transcriptional activity and enhances its proteasomal degradation. Phosphorylates JUND and this phosphorylation is inhibited in the presence of MEN1. In neurons, phosphorylates SYT4 which captures neuronal dense core vesicles at synapses. Phosphorylates EIF4ENIF1/4-ET in response to oxidative stress, promoting P-body assembly. Phosphorylates SIRT6 in response to oxidative stress, stimulating its mono-ADP-ribosyltransferase activity. Phosphorylates NLRP3, promoting assembly of the NLRP3 inflammasome. Phosphorylates ALKBH5 in response to reactive oxygen species (ROS), promoting ALKBH5 sumoylation and inactivation. This Mus musculus (Mouse) protein is Mitogen-activated protein kinase 8 (Mapk8).